The primary structure comprises 211 residues: 3-demethoxyubiquinol 3-hydroxylase (211 aa).

6 residues coordinate Fe cation: Glu60, Glu90, His93, Glu142, Glu174, and His177.

Belongs to the COQ7 family. Fe cation serves as cofactor.

It is found in the cell membrane. The enzyme catalyses a 5-methoxy-2-methyl-3-(all-trans-polyprenyl)benzene-1,4-diol + AH2 + O2 = a 3-demethylubiquinol + A + H2O. It functions in the pathway cofactor biosynthesis; ubiquinone biosynthesis. In terms of biological role, catalyzes the hydroxylation of 2-nonaprenyl-3-methyl-6-methoxy-1,4-benzoquinol during ubiquinone biosynthesis. The chain is 3-demethoxyubiquinol 3-hydroxylase from Francisella tularensis subsp. novicida (strain U112).